Here is a 121-residue protein sequence, read N- to C-terminus: UPF0145 protein SGR_4080 (121 aa).

This sequence belongs to the UPF0145 family.

The polypeptide is UPF0145 protein SGR_4080 (Streptomyces griseus subsp. griseus (strain JCM 4626 / CBS 651.72 / NBRC 13350 / KCC S-0626 / ISP 5235)).